We begin with the raw amino-acid sequence, 213 residues long: LIM domain-containing protein PLIM2c (213 aa).

LIM zinc-binding domains follow at residues 9 to 69 (DKCK…LFKE) and 105 to 165 (DKCA…LFLE). The segment at 177–213 (ANHRRSTAEEDKTEPKEDEANPTEEETSDAAAEEHES) is disordered. Over residues 182 to 195 (STAEEDKTEPKEDE) the composition is skewed to basic and acidic residues.

In terms of assembly, interacts with F-actin. In terms of tissue distribution, exclusively expressed in pollen grains.

It localises to the cytoplasm. Its subcellular location is the cytoskeleton. Binds to actin filaments and promotes cross-linking into thick bundles. Has an actin-stabilizing activity. Associates predominantly with long and dynamic actin bundles in the shank of growing pollen tubes. The actin regulatory activities are inhibited by pH &gt; 6.8 and/or high [Ca(2+)]. This Arabidopsis thaliana (Mouse-ear cress) protein is LIM domain-containing protein PLIM2c.